Reading from the N-terminus, the 463-residue chain is Immune-associated nucleotide-binding protein 10 (463 aa).

An AIG1-type G domain is found at 3–211 (EPIKNIVLVG…YTYQLHRKIK (209 aa)). The interval 12–19 (GRTGNGKS) is G1. GTP is bound by residues 12–20 (GRTGNGKSS) and serine 33. The segment at 39–43 (GVTMI) is G2. The tract at residues 61–64 (DTPG) is G3. The segment at 131-134 (TGGD) is G4. A G5 region spans residues 170-172 (DNK). Residue asparagine 171 coordinates GTP. The stretch at 173 to 308 (SKDEKKKVEQ…KQLIAQANRM (136 aa)) forms a coiled coil.

Belongs to the TRAFAC class TrmE-Era-EngA-EngB-Septin-like GTPase superfamily. AIG1/Toc34/Toc159-like paraseptin GTPase family. IAN subfamily. Expressed in radicles of the germinating seeds.

This is Immune-associated nucleotide-binding protein 10 from Arabidopsis thaliana (Mouse-ear cress).